A 394-amino-acid chain; its full sequence is Phosphoglycerate kinase (394 aa).

Substrate contacts are provided by residues aspartate 21 to asparagine 23, arginine 36, histidine 59 to arginine 62, arginine 118, and arginine 151. Serine 183 is subject to Phosphoserine. ATP-binding residues include lysine 201 and glycine 292. Threonine 299 carries the post-translational modification Phosphothreonine. ATP is bound by residues glutamate 323 and glycine 350–serine 353.

It belongs to the phosphoglycerate kinase family. Monomer.

It localises to the cytoplasm. The enzyme catalyses (2R)-3-phosphoglycerate + ATP = (2R)-3-phospho-glyceroyl phosphate + ADP. It functions in the pathway carbohydrate degradation; glycolysis; pyruvate from D-glyceraldehyde 3-phosphate: step 2/5. The polypeptide is Phosphoglycerate kinase (Bacillus cereus (strain ATCC 10987 / NRS 248)).